The following is a 532-amino-acid chain: Bifunctional purine biosynthesis protein PurH (532 aa).

One can recognise an MGS-like domain in the interval 1–148; it reads MQTPKPIKRA…KNHKDVTIVV (148 aa).

This sequence belongs to the PurH family.

It carries out the reaction (6R)-10-formyltetrahydrofolate + 5-amino-1-(5-phospho-beta-D-ribosyl)imidazole-4-carboxamide = 5-formamido-1-(5-phospho-D-ribosyl)imidazole-4-carboxamide + (6S)-5,6,7,8-tetrahydrofolate. It catalyses the reaction IMP + H2O = 5-formamido-1-(5-phospho-D-ribosyl)imidazole-4-carboxamide. Its pathway is purine metabolism; IMP biosynthesis via de novo pathway; 5-formamido-1-(5-phospho-D-ribosyl)imidazole-4-carboxamide from 5-amino-1-(5-phospho-D-ribosyl)imidazole-4-carboxamide (10-formyl THF route): step 1/1. The protein operates within purine metabolism; IMP biosynthesis via de novo pathway; IMP from 5-formamido-1-(5-phospho-D-ribosyl)imidazole-4-carboxamide: step 1/1. The sequence is that of Bifunctional purine biosynthesis protein PurH from Alteromonas mediterranea (strain DSM 17117 / CIP 110805 / LMG 28347 / Deep ecotype).